We begin with the raw amino-acid sequence, 289 residues long: 4-hydroxybenzoate octaprenyltransferase (289 aa).

The next 8 membrane-spanning stretches (helical) occupy residues 21-40 (PIGT…LAAG), 95-115 (VLAL…TMNS), 116-136 (LTIA…FMKR), 138-158 (IPIP…MAYA), 161-181 (ANAL…WTIA), 213-233 (IIGV…QLMG), 236-256 (AWYY…QRLI), and 268-288 (FLNN…NYLL).

The protein belongs to the UbiA prenyltransferase family. Mg(2+) serves as cofactor.

Its subcellular location is the cell inner membrane. It catalyses the reaction all-trans-octaprenyl diphosphate + 4-hydroxybenzoate = 4-hydroxy-3-(all-trans-octaprenyl)benzoate + diphosphate. It functions in the pathway cofactor biosynthesis; ubiquinone biosynthesis. Functionally, catalyzes the prenylation of para-hydroxybenzoate (PHB) with an all-trans polyprenyl group. Mediates the second step in the final reaction sequence of ubiquinone-8 (UQ-8) biosynthesis, which is the condensation of the polyisoprenoid side chain with PHB, generating the first membrane-bound Q intermediate 3-octaprenyl-4-hydroxybenzoate. This is 4-hydroxybenzoate octaprenyltransferase from Aeromonas salmonicida (strain A449).